The chain runs to 207 residues: Probable glutathione S-transferase 5 (207 aa).

One can recognise a GST N-terminal domain in the interval 2-81 (VSYKLTYFNG…FLAREFKLNG (80 aa)). Glutathione-binding positions include tyrosine 8, tryptophan 39, lysine 43, 51–53 (GQL), and 65–66 (QS). In terms of domain architecture, GST C-terminal spans 83-207 (TAWEEAQVNS…WIETRPVTPF (125 aa)).

It belongs to the GST superfamily. Sigma family.

It carries out the reaction RX + glutathione = an S-substituted glutathione + a halide anion + H(+). Functionally, conjugation of reduced glutathione to a wide number of exogenous and endogenous hydrophobic electrophiles. May play a role in the detoxification of reactive oxygen species produced during pathogenic bacterial infection. This Caenorhabditis elegans protein is Probable glutathione S-transferase 5 (gst-5).